The following is a 251-amino-acid chain: Pyrroloquinoline-quinone synthase (251 aa).

Belongs to the PqqC family.

It carries out the reaction 6-(2-amino-2-carboxyethyl)-7,8-dioxo-1,2,3,4,7,8-hexahydroquinoline-2,4-dicarboxylate + 3 O2 = pyrroloquinoline quinone + 2 H2O2 + 2 H2O + H(+). Its pathway is cofactor biosynthesis; pyrroloquinoline quinone biosynthesis. Functionally, ring cyclization and eight-electron oxidation of 3a-(2-amino-2-carboxyethyl)-4,5-dioxo-4,5,6,7,8,9-hexahydroquinoline-7,9-dicarboxylic-acid to PQQ. The sequence is that of Pyrroloquinoline-quinone synthase from Pseudomonas putida (strain GB-1).